Reading from the N-terminus, the 473-residue chain is Sarcalumenin (473 aa).

An N-terminal signal peptide occupies residues 1–20; the sequence is MRALVLLGCLLASLLFSGQA. Residues 90–331 form the Dynamin-type G domain; the sequence is ITSKPMVLFL…IENRLENKIA (242 aa). A G1 motif region spans residues 100 to 107; it reads GPWSVGKS. Residues 128–129 form a G2 motif region; that stretch reads EP. The tract at residues 190 to 193 is G3 motif; it reads DTPG. Residues 255–258 form a G4 motif region; it reads NKAD. Position 278 (P278) is a region of interest, G5 motif. N281 and N389 each carry an N-linked (GlcNAc...) asparagine glycan.

Belongs to the TRAFAC class dynamin-like GTPase superfamily. Dynamin/Fzo/YdjA family. In terms of processing, N-glycosylated.

The protein resides in the sarcoplasmic reticulum lumen. Its subcellular location is the sarcoplasmic reticulum membrane. The protein is Sarcalumenin (SRL) of Homo sapiens (Human).